The primary structure comprises 100 residues: Large ribosomal subunit protein bL21 (100 aa).

The protein belongs to the bacterial ribosomal protein bL21 family. As to quaternary structure, part of the 50S ribosomal subunit. Contacts protein L20.

Functionally, this protein binds to 23S rRNA in the presence of protein L20. This Mycoplasmopsis synoviae (strain 53) (Mycoplasma synoviae) protein is Large ribosomal subunit protein bL21.